A 171-amino-acid chain; its full sequence is ATP synthase subunit b (171 aa).

A helical transmembrane segment spans residues 2-22 (FVVKMVLGFLILLSPLCATGL).

This sequence belongs to the ATPase B chain family. In terms of assembly, F-type ATPases have 2 components, F(1) - the catalytic core - and F(0) - the membrane proton channel. F(1) has five subunits: alpha(3), beta(3), gamma(1), delta(1), epsilon(1). F(0) has three main subunits: a(1), b(2) and c(10-14). The alpha and beta chains form an alternating ring which encloses part of the gamma chain. F(1) is attached to F(0) by a central stalk formed by the gamma and epsilon chains, while a peripheral stalk is formed by the delta and b chains.

The protein resides in the cell inner membrane. In terms of biological role, f(1)F(0) ATP synthase produces ATP from ADP in the presence of a proton or sodium gradient. F-type ATPases consist of two structural domains, F(1) containing the extramembraneous catalytic core and F(0) containing the membrane proton channel, linked together by a central stalk and a peripheral stalk. During catalysis, ATP synthesis in the catalytic domain of F(1) is coupled via a rotary mechanism of the central stalk subunits to proton translocation. Its function is as follows. Component of the F(0) channel, it forms part of the peripheral stalk, linking F(1) to F(0). This is ATP synthase subunit b from Helicobacter pylori (strain ATCC 700392 / 26695) (Campylobacter pylori).